The sequence spans 417 residues: MDMHCKADPFSAMHPGHGGVNQLGGVFVNGRPLPDVVRQRIVELAHQGVRPCDISRQLRVSHGCVSKILGRYYETGSIKPGVIGGSKPKVATPKVVDKIAEYKRQNPTMFAWEIRDRLLAEGICDNDTVPSVSSINRIIRTKVQQPFHPTPDGAGTGVTAPGHTIVPSTASPPVSSASNDPVGSYSINGILGIPRSNGEKRKRDEVEVYTDPAHIRGGGGLHLVWTLRDVSEGSVPNGDSQSGVDSLRKHLRADTFTQQQLEALDRVFERPSYPDVFQASEHIKSEQGNEYSLPALTPGLDEVKSSLSASTNPELGSNVSGTQTYPVVTGRDMASTTLPGYPPHVPPTGQGSYPTSTLAGMVPGSEFSGNPYSHPQYTAYNEAWRFSNPALLSSPYYYSAAPRGSAPAAAAAAYDRH.

Positions 16 to 142 form a DNA-binding region, paired; sequence GHGGVNQLGG…SSINRIIRTK (127 aa). The interval 19-75 is PAI subdomain; it reads GVNQLGGVFVNGRPLPDVVRQRIVELAHQGVRPCDISRQLRVSHGCVSKILGRYYET. Residues 94-142 are RED subdomain; sequence KVVDKIAEYKRQNPTMFAWEIRDRLLAEGICDNDTVPSVSSINRIIRTK. Thr-226 is modified (phosphothreonine). Positions 304 to 325 are disordered; that stretch reads KSSLSASTNPELGSNVSGTQTY. Polar residues predominate over residues 305 to 325; it reads SSLSASTNPELGSNVSGTQTY.

As to quaternary structure, interacts with ELGN3; the interaction targets PAX2 for destruction. Interacts with TLE4. Expressed in primitive cells of the kidney, ureter, eye, ear and central nervous system.

It is found in the nucleus. Functionally, transcription factor that may have a role in kidney cell differentiation. Has a critical role in the development of the urogenital tract, the eyes, and the CNS. This is Paired box protein Pax-2 (PAX2) from Homo sapiens (Human).